We begin with the raw amino-acid sequence, 273 residues long: S-adenosylmethionine decarboxylase proenzyme (273 aa).

Residue S118 is the Schiff-base intermediate with substrate; via pyruvic acid of the active site. S118 is modified (pyruvic acid (Ser); by autocatalysis). Residue H123 is the Proton acceptor; for processing activity of the active site. C146 serves as the catalytic Proton donor; for catalytic activity.

The protein belongs to the prokaryotic AdoMetDC family. Type 2 subfamily. As to quaternary structure, heterooctamer of four alpha and four beta chains arranged as a tetramer of alpha/beta heterodimers. It depends on pyruvate as a cofactor. Post-translationally, is synthesized initially as an inactive proenzyme. Formation of the active enzyme involves a self-maturation process in which the active site pyruvoyl group is generated from an internal serine residue via an autocatalytic post-translational modification. Two non-identical subunits are generated from the proenzyme in this reaction, and the pyruvate is formed at the N-terminus of the alpha chain, which is derived from the carboxyl end of the proenzyme. The post-translation cleavage follows an unusual pathway, termed non-hydrolytic serinolysis, in which the side chain hydroxyl group of the serine supplies its oxygen atom to form the C-terminus of the beta chain, while the remainder of the serine residue undergoes an oxidative deamination to produce ammonia and the pyruvoyl group blocking the N-terminus of the alpha chain.

It carries out the reaction S-adenosyl-L-methionine + H(+) = S-adenosyl 3-(methylsulfanyl)propylamine + CO2. It functions in the pathway amine and polyamine biosynthesis; S-adenosylmethioninamine biosynthesis; S-adenosylmethioninamine from S-adenosyl-L-methionine: step 1/1. In terms of biological role, catalyzes the decarboxylation of S-adenosylmethionine to S-adenosylmethioninamine (dcAdoMet), the propylamine donor required for the synthesis of the polyamines spermine and spermidine from the diamine putrescine. The chain is S-adenosylmethionine decarboxylase proenzyme from Alkalilimnicola ehrlichii (strain ATCC BAA-1101 / DSM 17681 / MLHE-1).